Consider the following 417-residue polypeptide: RH-like protein IA (417 aa).

11 helical membrane passes run 12 to 32 (CLPL…YFFT), 44 to 64 (LVAS…GFGF), 77 to 97 (VAFS…LDGF), 125 to 145 (ISVD…MVLV), 172 to 192 (IYVF…KPLP), 203 to 223 (TIPS…WPSF), 238 to 258 (VFNT…GSSL), 265 to 285 (ISMS…GTSC), 287 to 307 (LITS…ISIG), 331 to 351 (NFSL…VHHT), and 358 to 378 (MIGF…TIAL).

Belongs to the ammonium transporter (TC 2.A.49) family. Rh subfamily.

It localises to the membrane. In terms of biological role, may be part of an oligomeric complex which is likely to have a transport or channel function in the erythrocyte membrane. This Pan troglodytes (Chimpanzee) protein is RH-like protein IA.